We begin with the raw amino-acid sequence, 163 residues long: Large ribosomal subunit protein uL10 (163 aa).

Belongs to the universal ribosomal protein uL10 family. In terms of assembly, part of the ribosomal stalk of the 50S ribosomal subunit. The N-terminus interacts with L11 and the large rRNA to form the base of the stalk. The C-terminus forms an elongated spine to which L12 dimers bind in a sequential fashion forming a multimeric L10(L12)X complex.

In terms of biological role, forms part of the ribosomal stalk, playing a central role in the interaction of the ribosome with GTP-bound translation factors. This chain is Large ribosomal subunit protein uL10 (rplJ), found in Pasteurella multocida (strain Pm70).